Reading from the N-terminus, the 278-residue chain is Protoheme IX farnesyltransferase 1 (278 aa).

A run of 9 helical transmembrane segments spans residues 12–32 (VIWL…GGVD), 35–55 (LFSL…FNHY), 76–96 (LITP…GISL), 98–118 (FLLL…FYAV), 129–149 (WLNI…GYAL), 158–178 (AVLI…ALAF), 199–221 (ERAV…WLYL), 226–248 (GAGG…YAAV), and 255–275 (MWKM…ALIL).

The protein belongs to the UbiA prenyltransferase family. Protoheme IX farnesyltransferase subfamily.

The protein localises to the cell membrane. The catalysed reaction is heme b + (2E,6E)-farnesyl diphosphate + H2O = Fe(II)-heme o + diphosphate. Its pathway is porphyrin-containing compound metabolism; heme O biosynthesis; heme O from protoheme: step 1/1. In terms of biological role, converts heme B (protoheme IX) to heme O by substitution of the vinyl group on carbon 2 of heme B porphyrin ring with a hydroxyethyl farnesyl side group. The polypeptide is Protoheme IX farnesyltransferase 1 (Pyrobaculum aerophilum (strain ATCC 51768 / DSM 7523 / JCM 9630 / CIP 104966 / NBRC 100827 / IM2)).